A 475-amino-acid polypeptide reads, in one-letter code: Sulfate adenylyltransferase subunit 1 (475 aa).

Residues 25–239 enclose the tr-type G domain; sequence KSLLRFLTCG…EVLETVEIQR (215 aa). Residues 34–41 form a G1 region; it reads GSVDDGKS. GTP is bound at residue 34–41; sequence GSVDDGKS. The tract at residues 92–96 is G2; sequence GITID. Positions 113-116 are G3; sequence DTPG. GTP-binding positions include 113–117 and 168–171; these read DTPGH and NKMD. Positions 168–171 are G4; sequence NKMD. Residues 206–208 are G5; sequence SAL.

The protein belongs to the TRAFAC class translation factor GTPase superfamily. Classic translation factor GTPase family. CysN/NodQ subfamily. As to quaternary structure, heterodimer composed of CysD, the smaller subunit, and CysN.

It catalyses the reaction sulfate + ATP + H(+) = adenosine 5'-phosphosulfate + diphosphate. It functions in the pathway sulfur metabolism; hydrogen sulfide biosynthesis; sulfite from sulfate: step 1/3. Its function is as follows. With CysD forms the ATP sulfurylase (ATPS) that catalyzes the adenylation of sulfate producing adenosine 5'-phosphosulfate (APS) and diphosphate, the first enzymatic step in sulfur assimilation pathway. APS synthesis involves the formation of a high-energy phosphoric-sulfuric acid anhydride bond driven by GTP hydrolysis by CysN coupled to ATP hydrolysis by CysD. The protein is Sulfate adenylyltransferase subunit 1 of Escherichia fergusonii (strain ATCC 35469 / DSM 13698 / CCUG 18766 / IAM 14443 / JCM 21226 / LMG 7866 / NBRC 102419 / NCTC 12128 / CDC 0568-73).